The sequence spans 1042 residues: Aldehyde reductase lnaA (1042 aa).

The segment at 29-425 (HAFLNPSAMA…GRRDHQVKVR (397 aa)) is adenylation (A) domain. Residues 532 to 609 (DNEDSTRGKL…RLAGILEERI (78 aa)) enclose the Carrier domain. An O-(pantetheine 4'-phosphoryl)serine modification is found at S569. A short-chain dehydrogenase/reductase (R) domain region spans residues 655-897 (LTGATGFVGS…FVPVDYVNAV (243 aa)).

Belongs to the NRP synthetase family.

The catalysed reaction is L-tyrosinal + AMP + diphosphate + NADP(+) = L-tyrosine + ATP + NADPH + H(+). It participates in secondary metabolite biosynthesis. Its function is as follows. Non-canonical nonribosomal peptide synthetase; part of the lna gene cluster that mediates the biosynthesis of diastereomeric piperazines. Lna and lnb clusters encode sets of enzymes that produce overlapping sets of previously undescribed metabolites such as piperazinomycin-like metabolites or morpholine. The lna and lnb biosynthetic pathways appear to be part of a signaling network that controls the formation of sclerotia, a resilient overwintering structure. One primary function of the non-canonical nonribosomal peptide synthetases lnaA and lnbA consists in the reduction of L-tyrosine. The presence in the clusters of tailoring enzymes such as the oxidoreductases lnaB, lnbB, lnaE or lnbE, as well as of the cytochrome P450 monooxygenases lnaC, lnaD, or lnbC, might explain formation of various diastereomeric piperazines. This chain is Aldehyde reductase lnaA, found in Aspergillus flavus (strain ATCC 200026 / FGSC A1120 / IAM 13836 / NRRL 3357 / JCM 12722 / SRRC 167).